Here is a 372-residue protein sequence, read N- to C-terminus: Lipoyl synthase, mitochondrial (372 aa).

Positions 106, 111, 117, 137, 141, 144, and 352 each coordinate [4Fe-4S] cluster. The Radical SAM core domain maps to 122–341 (EYGTATATIM…EKAGNELGFL (220 aa)).

The protein belongs to the radical SAM superfamily. Lipoyl synthase family. [4Fe-4S] cluster is required as a cofactor.

The protein resides in the mitochondrion. The enzyme catalyses [[Fe-S] cluster scaffold protein carrying a second [4Fe-4S](2+) cluster] + N(6)-octanoyl-L-lysyl-[protein] + 2 oxidized [2Fe-2S]-[ferredoxin] + 2 S-adenosyl-L-methionine + 4 H(+) = [[Fe-S] cluster scaffold protein] + N(6)-[(R)-dihydrolipoyl]-L-lysyl-[protein] + 4 Fe(3+) + 2 hydrogen sulfide + 2 5'-deoxyadenosine + 2 L-methionine + 2 reduced [2Fe-2S]-[ferredoxin]. The protein operates within protein modification; protein lipoylation via endogenous pathway; protein N(6)-(lipoyl)lysine from octanoyl-[acyl-carrier-protein]: step 2/2. Its function is as follows. Catalyzes the radical-mediated insertion of two sulfur atoms into the C-6 and C-8 positions of the octanoyl moiety bound to the lipoyl domains of lipoate-dependent enzymes, thereby converting the octanoylated domains into lipoylated derivatives. The polypeptide is Lipoyl synthase, mitochondrial (lias) (Xenopus laevis (African clawed frog)).